We begin with the raw amino-acid sequence, 379 residues long: Lipoyl synthase, mitochondrial (379 aa).

[4Fe-4S] cluster contacts are provided by Cys-94, Cys-99, Cys-105, Cys-126, Cys-130, Cys-133, and Ser-342. The region spanning 109-331 (GEDNGAATAT…EKEAMSMGFL (223 aa)) is the Radical SAM core domain.

Belongs to the radical SAM superfamily. Lipoyl synthase family. Requires [4Fe-4S] cluster as cofactor.

It localises to the mitochondrion. The enzyme catalyses [[Fe-S] cluster scaffold protein carrying a second [4Fe-4S](2+) cluster] + N(6)-octanoyl-L-lysyl-[protein] + 2 oxidized [2Fe-2S]-[ferredoxin] + 2 S-adenosyl-L-methionine + 4 H(+) = [[Fe-S] cluster scaffold protein] + N(6)-[(R)-dihydrolipoyl]-L-lysyl-[protein] + 4 Fe(3+) + 2 hydrogen sulfide + 2 5'-deoxyadenosine + 2 L-methionine + 2 reduced [2Fe-2S]-[ferredoxin]. It functions in the pathway protein modification; protein lipoylation via endogenous pathway; protein N(6)-(lipoyl)lysine from octanoyl-[acyl-carrier-protein]: step 2/2. Its function is as follows. Catalyzes the radical-mediated insertion of two sulfur atoms into the C-6 and C-8 positions of the octanoyl moiety bound to the lipoyl domains of lipoate-dependent enzymes, thereby converting the octanoylated domains into lipoylated derivatives. This chain is Lipoyl synthase, mitochondrial, found in Leishmania braziliensis.